The following is a 39-amino-acid chain: Cytochrome b559 subunit beta (39 aa).

Residues Trp14–Ser30 form a helical membrane-spanning segment. Heme is bound at residue His18.

The protein belongs to the PsbE/PsbF family. In terms of assembly, heterodimer of an alpha subunit and a beta subunit. PSII is composed of 1 copy each of membrane proteins PsbA, PsbB, PsbC, PsbD, PsbE, PsbF, PsbH, PsbI, PsbJ, PsbK, PsbL, PsbM, PsbT, PsbX, PsbY, PsbZ, Psb30/Ycf12, at least 3 peripheral proteins of the oxygen-evolving complex and a large number of cofactors. It forms dimeric complexes. Heme b is required as a cofactor.

It localises to the plastid. The protein resides in the chloroplast thylakoid membrane. This b-type cytochrome is tightly associated with the reaction center of photosystem II (PSII). PSII is a light-driven water:plastoquinone oxidoreductase that uses light energy to abstract electrons from H(2)O, generating O(2) and a proton gradient subsequently used for ATP formation. It consists of a core antenna complex that captures photons, and an electron transfer chain that converts photonic excitation into a charge separation. This is Cytochrome b559 subunit beta from Pinus koraiensis (Korean pine).